Reading from the N-terminus, the 356-residue chain is NADH-quinone oxidoreductase subunit H (356 aa).

9 helical membrane passes run 17 to 37 (TGGI…LLLA), 51 to 71 (PNVV…KFVL), 83 to 103 (VVFI…WAVV), 116 to 136 (VGIL…IMGG), 162 to 182 (IGLI…STIV), 202 to 222 (LVLL…ALAE), 261 to 281 (IVLM…PGFP), 295 to 315 (LFLA…FAMA), and 334 to 354 (VFLP…VFGP).

This sequence belongs to the complex I subunit 1 family. As to quaternary structure, NDH-1 is composed of 14 different subunits. Subunits NuoA, H, J, K, L, M, N constitute the membrane sector of the complex.

The protein resides in the cell inner membrane. It carries out the reaction a quinone + NADH + 5 H(+)(in) = a quinol + NAD(+) + 4 H(+)(out). Functionally, NDH-1 shuttles electrons from NADH, via FMN and iron-sulfur (Fe-S) centers, to quinones in the respiratory chain. The immediate electron acceptor for the enzyme in this species is believed to be ubiquinone. Couples the redox reaction to proton translocation (for every two electrons transferred, four hydrogen ions are translocated across the cytoplasmic membrane), and thus conserves the redox energy in a proton gradient. This subunit may bind ubiquinone. This Caulobacter vibrioides (strain ATCC 19089 / CIP 103742 / CB 15) (Caulobacter crescentus) protein is NADH-quinone oxidoreductase subunit H.